Here is a 785-residue protein sequence, read N- to C-terminus: Endonuclease MutS2 (785 aa).

332–339 lines the ATP pocket; that stretch reads GPNTGGKT. Residues 710-785 form the Smr domain; it reads VDLRGMDSEE…GNGVTVVELK (76 aa).

This sequence belongs to the DNA mismatch repair MutS family. MutS2 subfamily. As to quaternary structure, homodimer. Binds to stalled ribosomes, contacting rRNA.

Its function is as follows. Endonuclease that is involved in the suppression of homologous recombination and thus may have a key role in the control of bacterial genetic diversity. Acts as a ribosome collision sensor, splitting the ribosome into its 2 subunits. Detects stalled/collided 70S ribosomes which it binds and splits by an ATP-hydrolysis driven conformational change. Acts upstream of the ribosome quality control system (RQC), a ribosome-associated complex that mediates the extraction of incompletely synthesized nascent chains from stalled ribosomes and their subsequent degradation. Probably generates substrates for RQC. This Clostridium novyi (strain NT) protein is Endonuclease MutS2.